A 1101-amino-acid polypeptide reads, in one-letter code: Rho GTPase-activating protein 30 (1101 aa).

The region spanning 20-215 is the Rho-GAP domain; that stretch reads CDLQEHLQHS…FILTHVDQLF (196 aa). Disordered regions lie at residues 224 to 243, 300 to 400, and 451 to 529; these read EVES…SPED, HETK…RAGG, and ALQH…AEDG. The segment covering 308-318 has biased composition (basic and acidic residues); sequence RGAEDREDKSN. Positions 360-376 are enriched in acidic residues; sequence LENDSIEAAEGEQEPEA. Positions 459 to 472 are enriched in pro residues; sequence ASGPGPGPGLGPGP. Residues 508 to 520 show a composition bias toward low complexity; the sequence is DSFSFLEDSSSSE. Ser-576 is subject to Phosphoserine. Disordered regions lie at residues 621–906 and 965–991; these read GPKP…QPSP and CPRP…SWRN. Composition is skewed to basic and acidic residues over residues 658-694, 701-735, 759-770, and 779-822; these read GEDK…DRGE, TKVR…KGVE, EEAQVEAGRDLE, and AEEK…DSRS. Low complexity predominate over residues 976 to 991; the sequence is GERAWGSRASRSSWRN. Ser-996 is subject to Phosphoserine. The segment at 1050–1101 is disordered; it reads LELPSEGAEGSGSRSRLSLPPREPQVPDPLLSSQRRSYAFETQANPGKGEGL. The span at 1053–1069 shows a compositional bias: low complexity; it reads PSEGAEGSGSRSRLSLP. Residues 1080–1094 show a composition bias toward polar residues; the sequence is LSSQRRSYAFETQAN.

Interacts with RHOU in a GTP-independent manner.

Its subcellular location is the cytoplasmic vesicle. In terms of biological role, GTPase-activating protein (GAP) for RAC1 and RHOA, but not for CDC42. This is Rho GTPase-activating protein 30 (ARHGAP30) from Homo sapiens (Human).